Reading from the N-terminus, the 227-residue chain is PKHD-type hydroxylase Bamb_4192 (227 aa).

Positions 78–178 (KVFPPLFNRY…RVASFFWIQS (101 aa)) constitute a Fe2OG dioxygenase domain. Residues His96, Asp98, and His159 each coordinate Fe cation. Position 169 (Arg169) interacts with 2-oxoglutarate.

It depends on Fe(2+) as a cofactor. Requires L-ascorbate as cofactor.

The protein is PKHD-type hydroxylase Bamb_4192 of Burkholderia ambifaria (strain ATCC BAA-244 / DSM 16087 / CCUG 44356 / LMG 19182 / AMMD) (Burkholderia cepacia (strain AMMD)).